Here is a 478-residue protein sequence, read N- to C-terminus: Cobyric acid synthase (478 aa).

Residues 250-437 enclose the GATase cobBQ-type domain; it reads QLRVVVPVLP…VHGVFDHPMH (188 aa). Cysteine 331 (nucleophile) is an active-site residue. Histidine 429 is a catalytic residue.

Belongs to the CobB/CobQ family. CobQ subfamily.

Its pathway is cofactor biosynthesis; adenosylcobalamin biosynthesis. Functionally, catalyzes amidations at positions B, D, E, and G on adenosylcobyrinic A,C-diamide. NH(2) groups are provided by glutamine, and one molecule of ATP is hydrogenolyzed for each amidation. This is Cobyric acid synthase from Xanthomonas euvesicatoria pv. vesicatoria (strain 85-10) (Xanthomonas campestris pv. vesicatoria).